Consider the following 289-residue polypeptide: HTH-type transcriptional regulator SoxR (289 aa).

Residues 1–58 (MEIKDLQIFQKVVEYGSVSKAAKSLNYVQSYVTVRIQKLEEELQTELFHRSSRGMVLN) enclose the HTH lysR-type domain. Positions 18 to 37 (VSKAAKSLNYVQSYVTVRIQ) form a DNA-binding region, H-T-H motif.

Belongs to the LysR transcriptional regulatory family.

Transcriptional repressor of soxA gene expression. The polypeptide is HTH-type transcriptional regulator SoxR (soxR) (Arthrobacter sp. (strain TE1826)).